The primary structure comprises 193 residues: MFNNILKQVGDYAKESLQAAKYIGQGLAVTFDHMSRRPITVQYPYEKLIPSERFRGRIHFEFDKCIACEVCVRVCPINLPVVDWEFNKAVKKKELKHYSIDFGVCIFCGNCVEYCPTNCLSMTEEYELAAYDRHDLNYDNVALGRLPYKVTEDPMVTPLRELGYLPKGVIEPHNLPKGSQRAGQHPEDLVKAE.

2 consecutive 4Fe-4S ferredoxin-type domains span residues 56 to 85 and 96 to 125; these read GRIHFEFDKCIACEVCVRVCPINLPVVDWE and KHYSIDFGVCIFCGNCVEYCPTNCLSMTEE. 8 residues coordinate [4Fe-4S] cluster: C65, C68, C71, C75, C105, C108, C111, and C115. The segment at 174–193 is disordered; it reads NLPKGSQRAGQHPEDLVKAE. Over residues 184–193 the composition is skewed to basic and acidic residues; it reads QHPEDLVKAE.

This sequence belongs to the complex I 23 kDa subunit family. As to quaternary structure, NDH-1 is composed of at least 11 different subunits. It depends on [4Fe-4S] cluster as a cofactor.

Its subcellular location is the cellular thylakoid membrane. The enzyme catalyses a plastoquinone + NADH + (n+1) H(+)(in) = a plastoquinol + NAD(+) + n H(+)(out). It carries out the reaction a plastoquinone + NADPH + (n+1) H(+)(in) = a plastoquinol + NADP(+) + n H(+)(out). NDH-1 shuttles electrons from an unknown electron donor, via FMN and iron-sulfur (Fe-S) centers, to quinones in the respiratory and/or the photosynthetic chain. The immediate electron acceptor for the enzyme in this species is believed to be plastoquinone. Couples the redox reaction to proton translocation, and thus conserves the redox energy in a proton gradient. This Synechocystis sp. (strain ATCC 27184 / PCC 6803 / Kazusa) protein is NAD(P)H-quinone oxidoreductase subunit I.